The chain runs to 95 residues: Aspartyl/glutamyl-tRNA(Asn/Gln) amidotransferase subunit C (95 aa).

It belongs to the GatC family. Heterotrimer of A, B and C subunits.

It carries out the reaction L-glutamyl-tRNA(Gln) + L-glutamine + ATP + H2O = L-glutaminyl-tRNA(Gln) + L-glutamate + ADP + phosphate + H(+). The catalysed reaction is L-aspartyl-tRNA(Asn) + L-glutamine + ATP + H2O = L-asparaginyl-tRNA(Asn) + L-glutamate + ADP + phosphate + 2 H(+). Allows the formation of correctly charged Asn-tRNA(Asn) or Gln-tRNA(Gln) through the transamidation of misacylated Asp-tRNA(Asn) or Glu-tRNA(Gln) in organisms which lack either or both of asparaginyl-tRNA or glutaminyl-tRNA synthetases. The reaction takes place in the presence of glutamine and ATP through an activated phospho-Asp-tRNA(Asn) or phospho-Glu-tRNA(Gln). The polypeptide is Aspartyl/glutamyl-tRNA(Asn/Gln) amidotransferase subunit C (Roseobacter denitrificans (strain ATCC 33942 / OCh 114) (Erythrobacter sp. (strain OCh 114))).